Reading from the N-terminus, the 129-residue chain is Small ribosomal subunit protein uS9 (129 aa).

Belongs to the universal ribosomal protein uS9 family.

This Chlorobium luteolum (strain DSM 273 / BCRC 81028 / 2530) (Pelodictyon luteolum) protein is Small ribosomal subunit protein uS9.